Reading from the N-terminus, the 765-residue chain is Zinc transporter ZIP6 (765 aa).

Positions 1–20 (MATDLSVIMILTFALWVTSP) are cleaved as a signal peptide. Residues 21 to 335 (LHELQSTAAF…PKTYSLQIAW (315 aa)) lie on the Extracellular side of the membrane. N-linked (GlcNAc...) asparagine glycosylation is present at Asn-68. 2 stretches are compositionally biased toward basic and acidic residues: residues 96-135 (DHEH…DHEH) and 174-186 (RPAE…RNIK). 2 disordered regions span residues 96-196 (DHEH…EVTS) and 209-257 (VETI…SEPR). A compositionally biased stretch (low complexity) spans 187-196 (ESASSSEVTS). A compositionally biased stretch (polar residues) spans 224 to 233 (VNPSTPPSIT). A compositionally biased stretch (basic residues) spans 238–247 (VGRLSRLARK). The span at 248–257 (KSNESVSEPR) shows a compositional bias: basic and acidic residues. Asn-250, Asn-275, and Asn-292 each carry an N-linked (GlcNAc...) asparagine glycan. Residues 336–356 (LGGFIAISIISFLSLLGVILV) form a helical membrane-spanning segment. The Cytoplasmic segment spans residues 357–365 (PLMNRVFFK). The chain crosses the membrane as a helical span at residues 366–386 (FLLSFLVALAVGTLSGDALLH). Topologically, residues 387-433 (LLPHSHASHQHSHSHEEPAMEMKRGPLFSHLSAQNIEESSYFDSTWK) are extracellular. The chain crosses the membrane as a helical span at residues 434–454 (GLTALGGLYFMFLVEHVLTLI). The Cytoplasmic segment spans residues 455–667 (KQFKDKKKKN…LKAGMTVKQA (213 aa)). Positions 458–519 (KDKKKKNQKK…EPSPFDSQQP (62 aa)) are disordered. Positions 475 to 495 (ESKKQLSKYDSQLSSNEEKVD) form a coiled coil. A phosphoserine mark is found at Ser-481 and Ser-488. Over residues 490–508 (NEEKVDPGERPESYLRADS) the composition is skewed to basic and acidic residues. The segment covering 509 to 519 (QEPSPFDSQQP) has biased composition (polar residues). A helical membrane pass occupies residues 668–688 (VLYNALSAMLAYLGMATGIFI). The Extracellular portion of the chain corresponds to 689–696 (GHYAENVS). Asn-694 carries N-linked (GlcNAc...) asparagine glycosylation. The helical transmembrane segment at 697–717 (MWIFALTAGLFMYVALVDMVP) threads the bilayer. The Cytoplasmic segment spans residues 718–734 (EMLHNDASDHGCSRWGY). Residues 735–755 (FFLQNAGILLGFGIMLLISIF) form a helical membrane-spanning segment. The Extracellular portion of the chain corresponds to 756–765 (EHKIVFRINF).

The protein belongs to the ZIP transporter (TC 2.A.5) family. Interacts with SLC39A10; which triggers cells to undergo EMT and mitosis. Found in a complex with SLC39A6, SLC39A10 and with the 'Ser-727' phosphorylated form of STAT3 throughout mitosis. Found in a complex with SLC39A6, SLC39A10 and with NCAM1; this complex controls NCAM1 phosphorylation and integration into focal adhesion complexes during epithelial-to-mesenchymal transition (EMT). Found in a complex with SLC39A6, SLC39A10 and with GSK3B that controls NCAM1 phosphorylation. Cleaved on the N-terminus before locating to the plasma membrane. In terms of processing, N-glycosylated. Post-translationally, phosphorylated by ZAP70 in response to TCR stimulation leading to its activation. In terms of tissue distribution, highly expressed in the brain and testis. In the brain strongly expressed in the CA1 and CA3 regions, Purkinje cells in cerebellum and dentate gyrus in hippocampus. In testis found in spermatids or mature sperms in the central areas of seminiferous tubules.

It localises to the cell membrane. The protein localises to the cell projection. It is found in the lamellipodium membrane. Its subcellular location is the membrane raft. The protein resides in the apical cell membrane. It catalyses the reaction Zn(2+)(in) = Zn(2+)(out). Functionally, zinc-influx transporter which plays a role in zinc homeostasis and in the induction of epithelial-to-mesenchymal transition (EMT). When associated with SLC39A10, the heterodimer formed by SLC39A10 and SLC39A6 mediates cellular zinc uptake to trigger cells to undergo epithelial- to-mesenchymal transition (EMT). The SLC39A10-SLC39A6 heterodimer also controls NCAM1 phosphorylation and its integration into focal adhesion complexes during EMT. Zinc influx inactivates GSK3B, enabling unphosphorylated SNAI1 in the nucleus to down-regulate adherence genes such as E-cadherin, causing loss of cell adherence. In addition, the SLC39A10-SLC39A6 heterodimer plays an essentiel role in initiating mitosis by importing zinc into cells to initiate a pathway resulting in the onset of mitosis. Participates in the T-cell receptor signaling regulation by mediating cellular zinc uptake into activated lymphocytes. Regulates the zinc influx necessary for proper meiotic progression to metaphase II (MII) that allows the oocyte-to-egg transition. This is Zinc transporter ZIP6 from Mus musculus (Mouse).